Consider the following 932-residue polypeptide: MKDSHSSRRKYEKEKLVFATNNGKRTEGTPAFLKSGNTASSSSPTLQFRPTSRYPTLSHEPVYTNVLDLSSRIDANRASIMSATMGTPPSALKFSKKKISRPVVSEDTFKDKLPRATIPVKPEPQPQYKIPAAPAPTSKRVVNRGLKLNTNLRQASPILPSPSLKLDRQDAPIQINHEQKEDFLVSIPRPTPMTNLDDGKDEIGQPDPHRKYMAPPRVNSISRVQRRMSYIPYGGFDDFLDNYYKDDDTVLEDNQLKSNSRIETLEEEDGAESDSITNTVSNASSDAEPAHRHLGPVYENSGHLPSKSHFSSTDSNTDSFGLESDERSLPSVSNDLKSSETLKNPRNDDLLTLQQPPRYPHSQMVMLPARSPVEVPAPTFDRRNVSRNSNNNSPEGYDNNRTNPTVNNLPSYPTNLARPKAIKPMPTSIHGQTSPLSPIPPVHTTHGLVSDIRPLPSVSSPIMRADSTPISHNLAVTPSFSPIPQQSNKSIGNHKNTSVANVSSKVANSKFERNISMMSNSNASSPAIFEVGAEAKEKTKDAIPCHPDDKLMIPSPKIVTHGDAMQEEQRLRQKSQITPDDEVELAKVYLNALETLENKPSLAPDQASYNTRINVYRTRAVELLKKNAYPSKTQNTVPEALFLIGQFHSQGVLGFRRDLGKAFELYSLAAKKGHPLSNYRVAVCLQTGTGVKPDTSKCVAIYKKAAEMDVVEAMFRIALIYLNGLLGQKRNISLGVQWLERACKSKGPESVRAMYELAKIYEQPDRYGVSATPERKFELYKQSAVYGYAAAQCKLGECYEHGLLGCLAEPRRSIFWYTRAAEQDYGEAELGLSGWYLTGSEGILPKNGEEALLWAHKAACKGLAKAQYAVGFMMEQGIGVAADPSSAHNWYIRAAKQGFPKAKKRLEEQALSSKQTHSKAPKKKQQEQCVVM.

Residues Met1–Leu16 are compositionally biased toward basic and acidic residues. Disordered regions lie at residues Met1–Arg53, Thr264–Pro356, and Glu374–Val406. Polar residues-rich tracts occupy residues Ser35–Arg53, Asp274–Ser285, and Ser308–Ser319. Residues Lys337–Asp349 are compositionally biased toward basic and acidic residues. Position 393 is a phosphoserine (Ser393). Sel1-like repeat units follow at residues Pro638 to His674, Pro675 to Val710, Val711 to Gly747, Val751 to Tyr788, Ala789 to Tyr825, Gly826 to Leu863, and Ala864 to Phe899. The tract at residues Arg905 to Met932 is disordered.

In Schizosaccharomyces pombe (strain 972 / ATCC 24843) (Fission yeast), this protein is Chitin synthase regulatory factor 3 (chr3).